Consider the following 85-residue polypeptide: UPF0291 protein SP_1473 (85 aa).

The disordered stretch occupies residues 62 to 85 (TPEKLRQVQREKGLHGRSLDDPNS).

It belongs to the UPF0291 family.

The protein localises to the cytoplasm. This Streptococcus pneumoniae serotype 4 (strain ATCC BAA-334 / TIGR4) protein is UPF0291 protein SP_1473.